A 498-amino-acid polypeptide reads, in one-letter code: ATP synthase subunit beta, chloroplastic (498 aa).

172–179 (GGAGVGKT) contributes to the ATP binding site.

Belongs to the ATPase alpha/beta chains family. In terms of assembly, F-type ATPases have 2 components, CF(1) - the catalytic core - and CF(0) - the membrane proton channel. CF(1) has five subunits: alpha(3), beta(3), gamma(1), delta(1), epsilon(1). CF(0) has four main subunits: a(1), b(1), b'(1) and c(9-12).

The protein localises to the plastid. The protein resides in the chloroplast thylakoid membrane. It catalyses the reaction ATP + H2O + 4 H(+)(in) = ADP + phosphate + 5 H(+)(out). Produces ATP from ADP in the presence of a proton gradient across the membrane. The catalytic sites are hosted primarily by the beta subunits. The sequence is that of ATP synthase subunit beta, chloroplastic from Eucalyptus globulus subsp. globulus (Tasmanian blue gum).